Here is a 318-residue protein sequence, read N- to C-terminus: CRISPR-associated endonuclease Cas1 1 (318 aa).

Mn(2+) is bound by residues E160, H225, and E240.

This sequence belongs to the CRISPR-associated endonuclease Cas1 family. In terms of assembly, homodimer, forms a heterotetramer with a Cas2 homodimer. Requires Mg(2+) as cofactor. Mn(2+) is required as a cofactor.

CRISPR (clustered regularly interspaced short palindromic repeat), is an adaptive immune system that provides protection against mobile genetic elements (viruses, transposable elements and conjugative plasmids). CRISPR clusters contain spacers, sequences complementary to antecedent mobile elements, and target invading nucleic acids. CRISPR clusters are transcribed and processed into CRISPR RNA (crRNA). Acts as a dsDNA endonuclease. Involved in the integration of spacer DNA into the CRISPR cassette. This is CRISPR-associated endonuclease Cas1 1 from Thermodesulfovibrio yellowstonii (strain ATCC 51303 / DSM 11347 / YP87).